Here is a 130-residue protein sequence, read N- to C-terminus: Small ribosomal subunit protein uS9 (130 aa).

Residues 107–130 (DSRKVERKKPGLKKARKASQFSKR) form a disordered region. The segment covering 111 to 130 (VERKKPGLKKARKASQFSKR) has biased composition (basic residues).

Belongs to the universal ribosomal protein uS9 family.

The chain is Small ribosomal subunit protein uS9 from Streptococcus sanguinis (strain SK36).